The following is a 582-amino-acid chain: TBCC domain-containing protein 1 (582 aa).

Residues 140 to 153 (EWPSPRSRSPSSSS) show a composition bias toward low complexity. The tract at residues 140–159 (EWPSPRSRSPSSSSSERDAK) is disordered. The region spanning 305–451 (PPGSRLVLMS…LWNQPLLFGV (147 aa)) is the C-CAP/cofactor C-like domain. Positions 547 to 558 (SLLPPTITPSSS) are enriched in low complexity. Positions 547–582 (SLLPPTITPSSSAEHWSSNQNTLKEQTHEQPTGTVC) are disordered. Polar residues predominate over residues 559–582 (AEHWSSNQNTLKEQTHEQPTGTVC).

It belongs to the TBCC family.

The protein localises to the cytoplasm. It localises to the cytoskeleton. The protein resides in the microtubule organizing center. It is found in the centrosome. Its subcellular location is the spindle pole. May play a role in the regulation of centrosome and Golgi apparatus positioning. This is TBCC domain-containing protein 1 (tbccd1) from Danio rerio (Zebrafish).